The following is a 95-amino-acid chain: UPF0125 protein BUsg_244 (95 aa).

This sequence belongs to the UPF0125 (RnfH) family.

This is UPF0125 protein BUsg_244 from Buchnera aphidicola subsp. Schizaphis graminum (strain Sg).